The sequence spans 393 residues: MSDEREVAEAATGEDASSPPPKTEAASDPQHPAASEGAAAAAASPPLLRCLVLTGFGGYDKVKLQSRPAAPPAPGPGQLTLRLRACGLNFADLMARQGLYDRLPPLPVTPGMEGAGVVIAVGEGVSDRKAGDRVMVLNRSGMWQEEVTVPSVQTFLIPEAMTFEEAAALLVNYITAYMVLFDFGNLQPGHSVLVHMAAGGVGMAAVQLCRTVENVTVFGTASASKHEALKENGVTHPIDYHTTDYVDEIKKISPKGVDIVMDPLGGSDTAKGYNLLKPMGKVVTYGMANLLTGPKRNLMALARTWWNQFSVTALQLLQANRAVCGFHLGYLDGEVELVSGVVARLLALYNQGHIKPHIDSVWPFEKVADAMKQMQEKKNVGKVLLVPGPEKEN.

The segment at 1 to 40 (MSDEREVAEAATGEDASSPPPKTEAASDPQHPAASEGAAA) is disordered. Ser-2 bears the N-acetylserine mark. Ser-2, Ser-18, Ser-27, Ser-35, and Ser-44 each carry phosphoserine.

This sequence belongs to the zinc-containing alcohol dehydrogenase family. Quinone oxidoreductase subfamily. Expressed in brain. Also expressed in glioblastoma cells.

Its subcellular location is the cytoplasm. It is found in the mitochondrion outer membrane. In terms of biological role, possesses ATPase activity. Plays a part in calcium-regulated keratinocyte activation in epidermal repair mechanisms. Has no effect on cell proliferation. Negatively regulates mitochondrial fusion in cooperation with mitofusin proteins (MFN1-2). In Homo sapiens (Human), this protein is Synaptic vesicle membrane protein VAT-1 homolog (VAT1).